The primary structure comprises 580 residues: F-box only protein 24 (580 aa).

Residues 36–82 form the F-box domain; the sequence is PISIQLFPPELVEHIISFLPVRDLVALGQTCRYFHEVCDAEGVWRRI. The RCC1 repeat unit spans residues 376–425; sequence GRIFMQGNNRYGQLGTGDKMDRGEPTQVRYLQRPITLWCGLNHSLVLSQS.

In terms of assembly, directly interacts with SKP1 and CUL1.

Its function is as follows. Substrate-recognition component of the SCF (SKP1-CUL1-F-box protein)-type E3 ubiquitin ligase complex. This chain is F-box only protein 24 (FBXO24), found in Macaca fascicularis (Crab-eating macaque).